The sequence spans 142 residues: Nucleoside diphosphate kinase (142 aa).

6 residues coordinate ATP: K11, F59, R87, T93, R104, and N114. The active-site Pros-phosphohistidine intermediate is the H117.

The protein belongs to the NDK family. As to quaternary structure, homotetramer. Mg(2+) serves as cofactor.

Its subcellular location is the cytoplasm. The enzyme catalyses a 2'-deoxyribonucleoside 5'-diphosphate + ATP = a 2'-deoxyribonucleoside 5'-triphosphate + ADP. It catalyses the reaction a ribonucleoside 5'-diphosphate + ATP = a ribonucleoside 5'-triphosphate + ADP. Functionally, major role in the synthesis of nucleoside triphosphates other than ATP. The ATP gamma phosphate is transferred to the NDP beta phosphate via a ping-pong mechanism, using a phosphorylated active-site intermediate. This Pectobacterium atrosepticum (strain SCRI 1043 / ATCC BAA-672) (Erwinia carotovora subsp. atroseptica) protein is Nucleoside diphosphate kinase.